A 425-amino-acid chain; its full sequence is Putative E3 ubiquitin-protein ligase UBR7 (425 aa).

The UBR-type zinc-finger motif lies at 44-116; sequence EKCSYSQGSV…KNLECKLFPD (73 aa). The PHD-type; atypical zinc finger occupies 132 to 188; the sequence is GLYCVCKRPYPDPEDEVPDEMIQCVVCEDWFHGRHLGAIPPESGDFQEMVCQACMRR. Residues 212-269 form a disordered region; sequence LPNATGMGDEDVSKPENGAPQDNGLKEDAPEHGRDSVNEVKAEQKNEPCSSSSSESDL. Residues Lys225 and Lys252 each participate in a glycyl lysine isopeptide (Lys-Gly) (interchain with G-Cter in SUMO2) cross-link. The span at 235–257 shows a compositional bias: basic and acidic residues; sequence GLKEDAPEHGRDSVNEVKAEQKN. Ser264 carries the post-translational modification Phosphoserine. Glycyl lysine isopeptide (Lys-Gly) (interchain with G-Cter in SUMO2) cross-links involve residues Lys274 and Lys398.

As to expression, expressed in testis and sperm (at protein level).

It catalyses the reaction S-ubiquitinyl-[E2 ubiquitin-conjugating enzyme]-L-cysteine + [acceptor protein]-L-lysine = [E2 ubiquitin-conjugating enzyme]-L-cysteine + N(6)-ubiquitinyl-[acceptor protein]-L-lysine.. The protein operates within protein modification; protein ubiquitination. Functionally, E3 ubiquitin-protein ligase which is a component of the N-end rule pathway. Recognizes and binds to proteins bearing specific N-terminal residues that are destabilizing according to the N-end rule, leading to their ubiquitination and subsequent degradation. The polypeptide is Putative E3 ubiquitin-protein ligase UBR7 (Ubr7) (Mus musculus (Mouse)).